We begin with the raw amino-acid sequence, 339 residues long: Tetraacyldisaccharide 4'-kinase (339 aa).

An ATP-binding site is contributed by 58-65; the sequence is NVGGVGKT.

Belongs to the LpxK family.

It catalyses the reaction a lipid A disaccharide + ATP = a lipid IVA + ADP + H(+). It participates in glycolipid biosynthesis; lipid IV(A) biosynthesis; lipid IV(A) from (3R)-3-hydroxytetradecanoyl-[acyl-carrier-protein] and UDP-N-acetyl-alpha-D-glucosamine: step 6/6. Transfers the gamma-phosphate of ATP to the 4'-position of a tetraacyldisaccharide 1-phosphate intermediate (termed DS-1-P) to form tetraacyldisaccharide 1,4'-bis-phosphate (lipid IVA). The polypeptide is Tetraacyldisaccharide 4'-kinase (Chromobacterium violaceum (strain ATCC 12472 / DSM 30191 / JCM 1249 / CCUG 213 / NBRC 12614 / NCIMB 9131 / NCTC 9757 / MK)).